An 83-amino-acid polypeptide reads, in one-letter code: U3-theraphotoxin-Cg1a (83 aa).

The N-terminal stretch at 1 to 23 (MRTFTLIAILTCAVLVIFHAAAA) is a signal peptide. Residues 24–44 (EELEAQDVIETEALATLDEER) constitute a propeptide that is removed on maturation. 3 disulfides stabilise this stretch: C48-C61, C52-C75, and C69-C80.

This sequence belongs to the neurotoxin 12 (Hwtx-2) family. 03 (juruin) subfamily. Contains 3 disulfide bonds. Two different connectivities are observed in similar proteins (C1-C3, C2-C5, C4-C6 or C1-C4, C2-C5, C3-C6). Expressed by the venom gland.

Its subcellular location is the secreted. Probable ion channel inhibitor. In Chilobrachys guangxiensis (Chinese earth tiger tarantula), this protein is U3-theraphotoxin-Cg1a.